Here is a 296-residue protein sequence, read N- to C-terminus: uncharacterized protein (296 aa).

Residues Val-129–Gln-170 are a coiled coil. Residues Lys-165–Ala-187 are disordered.

This is an uncharacterized protein from Ostreid herpesvirus 1 (isolate France) (OsHV-1).